The sequence spans 419 residues: UDP-N-acetylglucosamine 1-carboxyvinyltransferase (419 aa).

22–23 (KN) provides a ligand contact to phosphoenolpyruvate. Residue Arg-93 participates in UDP-N-acetyl-alpha-D-glucosamine binding. The active-site Proton donor is Cys-117. Position 117 is a 2-(S-cysteinyl)pyruvic acid O-phosphothioketal (Cys-117). UDP-N-acetyl-alpha-D-glucosamine is bound by residues Asp-307 and Ile-329.

It belongs to the EPSP synthase family. MurA subfamily.

It is found in the cytoplasm. It carries out the reaction phosphoenolpyruvate + UDP-N-acetyl-alpha-D-glucosamine = UDP-N-acetyl-3-O-(1-carboxyvinyl)-alpha-D-glucosamine + phosphate. It participates in cell wall biogenesis; peptidoglycan biosynthesis. In terms of biological role, cell wall formation. Adds enolpyruvyl to UDP-N-acetylglucosamine. The sequence is that of UDP-N-acetylglucosamine 1-carboxyvinyltransferase from Shewanella sp. (strain MR-7).